The sequence spans 203 residues: 22.3 kDa class VI heat shock protein (203 aa).

The sHSP domain occupies 86 to 203; the sequence is ALRRGARTTV…DAHQAAAATA (118 aa).

Belongs to the small heat shock protein (HSP20) family. May form oligomeric structures.

It is found in the cytoplasm. The chain is 22.3 kDa class VI heat shock protein (HSP22.3) from Oryza sativa subsp. japonica (Rice).